The following is a 342-amino-acid chain: Ribosomal RNA small subunit methyltransferase C (342 aa).

This sequence belongs to the methyltransferase superfamily. RsmC family. In terms of assembly, monomer.

The protein resides in the cytoplasm. The catalysed reaction is guanosine(1207) in 16S rRNA + S-adenosyl-L-methionine = N(2)-methylguanosine(1207) in 16S rRNA + S-adenosyl-L-homocysteine + H(+). In terms of biological role, specifically methylates the guanine in position 1207 of 16S rRNA in the 30S particle. This is Ribosomal RNA small subunit methyltransferase C from Citrobacter koseri (strain ATCC BAA-895 / CDC 4225-83 / SGSC4696).